A 708-amino-acid polypeptide reads, in one-letter code: Soluble guanylate cyclase gcy-37 (708 aa).

Histidine 105 contacts heme. Positions 368 to 409 (LNQSRICQMELNKKLEETMKKMKKMTEELEVKKSQTDRLLFE) form a coiled coil. The 129-residue stretch at 434–562 (SVIFTDIPDF…NTVNVTKSIC (129 aa)) folds into the Guanylate cyclase domain. Mg(2+) contacts are provided by aspartate 439 and aspartate 483.

The protein belongs to the adenylyl cyclase class-4/guanylyl cyclase family. Heterodimer; with other soluble guanylate cyclases. The cofactor is heme. Expressed in a small number of neurons, corresponding to URX, AQR and PQR neurons.

It localises to the cytoplasm. The catalysed reaction is GTP = 3',5'-cyclic GMP + diphosphate. May be regulated by molecular oxygen. Probably not activated by nitric oxide (NO). Synthesizes cyclic GMP (cGMP) from GTP. May play a role in sensory neurons. The chain is Soluble guanylate cyclase gcy-37 (gcy-37) from Caenorhabditis elegans.